The chain runs to 440 residues: 3-phosphoshikimate 1-carboxyvinyltransferase (440 aa).

3 residues coordinate 3-phosphoshikimate: K19, S20, and R24. Position 19 (K19) interacts with phosphoenolpyruvate. Residues G92 and R121 each coordinate phosphoenolpyruvate. 3-phosphoshikimate contacts are provided by S166, Q168, D315, and K342. Residue Q168 coordinates phosphoenolpyruvate. The Proton acceptor role is filled by D315. The phosphoenolpyruvate site is built by R346 and R399.

It belongs to the EPSP synthase family. In terms of assembly, monomer.

It is found in the cytoplasm. The catalysed reaction is 3-phosphoshikimate + phosphoenolpyruvate = 5-O-(1-carboxyvinyl)-3-phosphoshikimate + phosphate. It participates in metabolic intermediate biosynthesis; chorismate biosynthesis; chorismate from D-erythrose 4-phosphate and phosphoenolpyruvate: step 6/7. In terms of biological role, catalyzes the transfer of the enolpyruvyl moiety of phosphoenolpyruvate (PEP) to the 5-hydroxyl of shikimate-3-phosphate (S3P) to produce enolpyruvyl shikimate-3-phosphate and inorganic phosphate. This Leptospira borgpetersenii serovar Hardjo-bovis (strain JB197) protein is 3-phosphoshikimate 1-carboxyvinyltransferase.